The chain runs to 1121 residues: tRNA (34-2'-O)-methyltransferase regulator WDR6 (1121 aa).

At M1 the chain carries N-acetylmethionine. 19 WD repeats span residues 53–97 (IKRV…VVKI), 105–143 (RELW…LYDP), 147–189 (CILQ…VWYP), 200–238 (APDR…IWKV), 247–285 (RVQN…VWSH), 289–327 (ILQA…LWHL), 335–376 (LGVS…LYDV), 381–422 (WEQL…VVPI), 425–470 (PTAA…ISAA), 476–520 (IFVK…LFPS), 559–598 (PVST…FVRD), 604–642 (VLRQ…VWNP), 645–684 (HEKL…LYRA), 739–785 (LTDI…VWGI), 848–893 (HNRH…LFLL), 901–946 (QLLA…FWDL), 970–1012 (GTPS…VFVL), 1036–1073 (EEYS…FWRL), and 1079–1121 (TFMN…NWYD).

Belongs to the WD repeat WDR6 family. In terms of assembly, interacts with FTSJ1; the interaction is direct, and required for 2'-O-methylation of position 34 in substrate tRNAs. Interacts with IRS4. Interacts with STK11/LKB1.

Its subcellular location is the cytoplasm. Together with methyltransferase FTSJ1, methylates the 2'-O-ribose of nucleotides at position 34 of the tRNA anticodon loop of substrate tRNAs. Required for the correct positioning of the substrate tRNA for methylation. Required to suppress amino acid starvation-induced autophagy. Enhances the STK11/LKB1-induced cell growth suppression activity. This chain is tRNA (34-2'-O)-methyltransferase regulator WDR6 (WDR6), found in Pongo abelii (Sumatran orangutan).